Here is a 466-residue protein sequence, read N- to C-terminus: Ribosomal protein uS12 methylthiotransferase RimO (466 aa).

Residues 18–133 form the MTTase N-terminal domain; it reads PRIGFVSLGC…VMDAVHQHVP (116 aa). [4Fe-4S] cluster-binding residues include Cys-27, Cys-63, Cys-92, Cys-164, Cys-168, and Cys-171. The Radical SAM core domain maps to 150–391; that stretch reads LTPKHYAYLK…MAVAEAVSTA (242 aa). The TRAM domain maps to 394–466; the sequence is QRRVGSSMQV…QGHDLIGELI (73 aa).

The protein belongs to the methylthiotransferase family. RimO subfamily. [4Fe-4S] cluster is required as a cofactor.

The protein resides in the cytoplasm. The enzyme catalyses L-aspartate(89)-[ribosomal protein uS12]-hydrogen + (sulfur carrier)-SH + AH2 + 2 S-adenosyl-L-methionine = 3-methylsulfanyl-L-aspartate(89)-[ribosomal protein uS12]-hydrogen + (sulfur carrier)-H + 5'-deoxyadenosine + L-methionine + A + S-adenosyl-L-homocysteine + 2 H(+). In terms of biological role, catalyzes the methylthiolation of an aspartic acid residue of ribosomal protein uS12. This Leptothrix cholodnii (strain ATCC 51168 / LMG 8142 / SP-6) (Leptothrix discophora (strain SP-6)) protein is Ribosomal protein uS12 methylthiotransferase RimO.